The sequence spans 1407 residues: Probable phosphoribosylformylglycinamidine synthase, chloroplastic/mitochondrial (1407 aa).

Residues 1 to 53 (MNTSQATRAALFLNGSNRQAMLLQRSSMSQLWGSVRMRTSRLSLNRTKAVSLR) constitute a chloroplast and mitochondrion transit peptide. ATP is bound by residues 407-418 (GAETGAGGRIRD), 487-489 (QGY), and A786. Positions 787, 826, 830, and 989 each coordinate Mg(2+). S991 provides a ligand contact to ATP. Residues 1141–1381 (KVAVIREEGS…LMWQFPWYPT (241 aa)) form the Glutamine amidotransferase type-1 domain. C1235 serves as the catalytic Nucleophile. Catalysis depends on residues H1366 and E1368.

In the N-terminal section; belongs to the FGAMS family.

The protein resides in the plastid. The protein localises to the chloroplast. It localises to the mitochondrion. It carries out the reaction N(2)-formyl-N(1)-(5-phospho-beta-D-ribosyl)glycinamide + L-glutamine + ATP + H2O = 2-formamido-N(1)-(5-O-phospho-beta-D-ribosyl)acetamidine + L-glutamate + ADP + phosphate + H(+). It functions in the pathway purine metabolism; IMP biosynthesis via de novo pathway; 5-amino-1-(5-phospho-D-ribosyl)imidazole from N(2)-formyl-N(1)-(5-phospho-D-ribosyl)glycinamide: step 1/2. Functionally, essential to the male gametophyte development. Phosphoribosylformylglycinamidine synthase involved in the purines biosynthetic pathway. Catalyzes the ATP-dependent conversion of formylglycinamide ribonucleotide (FGAR) and glutamine to yield formylglycinamidine ribonucleotide (FGAM) and glutamate. The polypeptide is Probable phosphoribosylformylglycinamidine synthase, chloroplastic/mitochondrial (Arabidopsis thaliana (Mouse-ear cress)).